A 123-amino-acid chain; its full sequence is Holo-[acyl-carrier-protein] synthase (123 aa).

Positions 8 and 50 each coordinate Mg(2+).

It belongs to the P-Pant transferase superfamily. AcpS family. The cofactor is Mg(2+).

The protein resides in the cytoplasm. It carries out the reaction apo-[ACP] + CoA = holo-[ACP] + adenosine 3',5'-bisphosphate + H(+). Functionally, transfers the 4'-phosphopantetheine moiety from coenzyme A to a Ser of acyl-carrier-protein. In Kocuria rhizophila (strain ATCC 9341 / DSM 348 / NBRC 103217 / DC2201), this protein is Holo-[acyl-carrier-protein] synthase.